The sequence spans 337 residues: tRNA N6-adenosine threonylcarbamoyltransferase (337 aa).

Fe cation-binding residues include His-111 and His-115. Substrate is bound by residues 134-138 (LVSGG), Asp-167, Gly-180, and Asn-272. Residue Asp-300 coordinates Fe cation.

This sequence belongs to the KAE1 / TsaD family. Fe(2+) serves as cofactor.

It localises to the cytoplasm. The enzyme catalyses L-threonylcarbamoyladenylate + adenosine(37) in tRNA = N(6)-L-threonylcarbamoyladenosine(37) in tRNA + AMP + H(+). Its function is as follows. Required for the formation of a threonylcarbamoyl group on adenosine at position 37 (t(6)A37) in tRNAs that read codons beginning with adenine. Is involved in the transfer of the threonylcarbamoyl moiety of threonylcarbamoyl-AMP (TC-AMP) to the N6 group of A37, together with TsaE and TsaB. TsaD likely plays a direct catalytic role in this reaction. The chain is tRNA N6-adenosine threonylcarbamoyltransferase from Escherichia coli O127:H6 (strain E2348/69 / EPEC).